A 497-amino-acid chain; its full sequence is Glycerol kinase (497 aa).

Thr-11 provides a ligand contact to ADP. The ATP site is built by Thr-11, Ser-12, and Ser-13. Thr-11 provides a ligand contact to sn-glycerol 3-phosphate. Position 15 (Arg-15) interacts with ADP. The sn-glycerol 3-phosphate site is built by Arg-81, Glu-82, Tyr-133, and Asp-242. Glycerol is bound by residues Arg-81, Glu-82, Tyr-133, Asp-242, and Gln-243. Positions 264 and 307 each coordinate ADP. ATP-binding residues include Thr-264, Gly-307, Gln-311, and Gly-412. ADP is bound by residues Gly-412 and Asn-416.

This sequence belongs to the FGGY kinase family.

It carries out the reaction glycerol + ATP = sn-glycerol 3-phosphate + ADP + H(+). It functions in the pathway polyol metabolism; glycerol degradation via glycerol kinase pathway; sn-glycerol 3-phosphate from glycerol: step 1/1. With respect to regulation, inhibited by fructose 1,6-bisphosphate (FBP). Key enzyme in the regulation of glycerol uptake and metabolism. Catalyzes the phosphorylation of glycerol to yield sn-glycerol 3-phosphate. In Leptothrix cholodnii (strain ATCC 51168 / LMG 8142 / SP-6) (Leptothrix discophora (strain SP-6)), this protein is Glycerol kinase.